A 137-amino-acid polypeptide reads, in one-letter code: Nucleoside diphosphate kinase (137 aa).

Residues lysine 9, phenylalanine 57, arginine 85, threonine 91, arginine 102, and asparagine 112 each contribute to the ATP site. Histidine 115 serves as the catalytic Pros-phosphohistidine intermediate.

The protein belongs to the NDK family. Homotetramer. Requires Mg(2+) as cofactor.

Its subcellular location is the cytoplasm. The enzyme catalyses a 2'-deoxyribonucleoside 5'-diphosphate + ATP = a 2'-deoxyribonucleoside 5'-triphosphate + ADP. It carries out the reaction a ribonucleoside 5'-diphosphate + ATP = a ribonucleoside 5'-triphosphate + ADP. Its function is as follows. Major role in the synthesis of nucleoside triphosphates other than ATP. The ATP gamma phosphate is transferred to the NDP beta phosphate via a ping-pong mechanism, using a phosphorylated active-site intermediate. The sequence is that of Nucleoside diphosphate kinase from Pelobacter propionicus (strain DSM 2379 / NBRC 103807 / OttBd1).